We begin with the raw amino-acid sequence, 219 residues long: Nodulation protein NolA (219 aa).

Residues 10–79 (RWRIGELAEA…LHEIRKAMEG (70 aa)) form the HTH merR-type domain. Residues 13-32 (IGELAEATGVTVRTLHHYEH) constitute a DNA-binding region (H-T-H motif).

In terms of biological role, involved in genotype-specific nodulation of soybeans. The sequence is that of Nodulation protein NolA (nolA) from Bradyrhizobium elkanii.